Here is a 167-residue protein sequence, read N- to C-terminus: Shikimate kinase (167 aa).

8–15 provides a ligand contact to ATP; it reads GFMGSGKT.

This sequence belongs to the shikimate kinase family.

The protein localises to the cytoplasm. It catalyses the reaction shikimate + ATP = 3-phosphoshikimate + ADP + H(+). The protein operates within metabolic intermediate biosynthesis; chorismate biosynthesis; chorismate from D-erythrose 4-phosphate and phosphoenolpyruvate: step 5/7. The sequence is that of Shikimate kinase from Helicobacter hepaticus (strain ATCC 51449 / 3B1).